The following is a 354-amino-acid chain: Guanine nucleotide-binding protein G(i) subunit alpha-1 (354 aa).

Gly-2 is lipidated: N-myristoyl glycine. Cys-3 is lipidated: S-palmitoyl cysteine. One can recognise a G-alpha domain in the interval 32 to 354 (REVKLLLLGA…KNNLKDCGLF (323 aa)). Residues 35-48 (KLLLLGAGESGKST) form a G1 motif region. GTP is bound by residues 43 to 48 (ESGKST), 150 to 151 (DS), and 175 to 178 (LRTR). Residue Ser-47 coordinates Mg(2+). A G2 motif region spans residues 173–181 (DVLRTRVKT). Thr-181 contacts Mg(2+). The tract at residues 196 to 205 (FKMFDVGGQR) is G3 motif. GTP contacts are provided by residues 200 to 204 (DVGGQ), 269 to 272 (NKKD), and Ala-326. The tract at residues 265–272 (ILFLNKKD) is G4 motif. The segment at 324 to 329 (TCATDT) is G5 motif.

This sequence belongs to the G-alpha family. G(i/o/t/z) subfamily. As to quaternary structure, heterotrimeric G proteins are composed of 3 units; alpha, beta and gamma. The alpha chain contains the guanine nucleotide binding site. Part of a spindle orientation complex at least composed of GNAI1, GPSM2 and NUMA1. Identified in complex with the beta subunit GNB1 and the gamma subunit GNG1. Identified in complex with the beta subunit GNB1 and the gamma subunit GNG2. Component of the TAS2R14-GNAI1 complex, consisting of TAS2R14, GNAI1, GNB1 and GNG2; within the complex interacts with TAS2R14; this complex plays a role in the perception of bitterness. GTP binding causes dissociation of the heterotrimer, liberating the individual subunits so that they can interact with downstream effector proteins. Interacts (GDP-bound form) with GPSM1; this inhibits guanine nucleotide exchange and GTP binding. Interacts (GDP-bound form) with GPSM2 (via GoLoco domains); this inhibits guanine nucleotide exchange. Interacts with RGS10; this strongly enhances GTP hydrolysis. Interacts with RGS1 and RGS16; this strongly enhances GTPase activity. Interacts with RGS4. Interacts with RGS12. Interacts (via active GTP- or inactive GDP-bound forms) with RGS14 (via RGS and GoLoco domains). Interacts with RGS3, RGS6, RGS7, RGS8, RGS17, RGS18 and RGS20 (in vitro). Interacts (GDP-bound form) with RIC8A (via C-terminus); promoting GNAI1 folding and association with the plasma membrane. Interacts (inactive GDP-bound form) with NUCB1 (via GBA motif); the interaction leads to activation of GNAI1. Interacts (inactive GDP-bound form) with CCDC88C/DAPLE (via GBA motif); the interaction leads to activation of GNAI1. Interacts (inactive GDP-bound form) with CCDC8A/GIV (via GBA motif). Post-translationally, myristoylation at Gly-2 is required for membrane anchoring before palmitoylation. In terms of processing, palmitoylation at Cys-3 varies with membrane lipid composition.

It localises to the nucleus. The protein resides in the cytoplasm. The protein localises to the cell membrane. Its subcellular location is the cytoskeleton. It is found in the microtubule organizing center. It localises to the centrosome. The protein resides in the cell cortex. The protein localises to the membrane. The enzyme catalyses GTP + H2O = GDP + phosphate + H(+). Its function is as follows. Guanine nucleotide-binding proteins (G proteins) function as transducers downstream of G protein-coupled receptors (GPCRs) in numerous signaling cascades. The alpha chain contains the guanine nucleotide binding site and alternates between an active, GTP-bound state and an inactive, GDP-bound state. Signaling by an activated GPCR promotes GDP release and GTP binding. The alpha subunit has a low GTPase activity that converts bound GTP to GDP, thereby terminating the signal. Both GDP release and GTP hydrolysis are modulated by numerous regulatory proteins. Signaling is mediated via effector proteins, such as adenylate cyclase. Inhibits adenylate cyclase activity of ADCY1, ADCY5 and ADCY6, leading to decreased intracellular cAMP levels. The inactive GDP-bound form prevents the association of RGS14 with centrosomes and is required for the translocation of RGS14 from the cytoplasm to the plasma membrane. Required for normal cytokinesis during mitosis. Required for cortical dynein-dynactin complex recruitment during metaphase. This chain is Guanine nucleotide-binding protein G(i) subunit alpha-1 (GNAI1), found in Bos taurus (Bovine).